An 889-amino-acid chain; its full sequence is DNA mismatch repair protein MutS (889 aa).

ATP is bound at residue 622-629 (GPNMAGKS). The tract at residues 869-889 (QRVKRPEKAPADVTAETEDQE) is disordered.

It belongs to the DNA mismatch repair MutS family.

In terms of biological role, this protein is involved in the repair of mismatches in DNA. It is possible that it carries out the mismatch recognition step. This protein has a weak ATPase activity. This is DNA mismatch repair protein MutS from Desulfatibacillum aliphaticivorans.